Consider the following 273-residue polypeptide: 4-hydroxy-tetrahydrodipicolinate reductase (273 aa).

NAD(+)-binding positions include 11–16 and glutamate 36; that span reads GAGGRM. Arginine 37 provides a ligand contact to NADP(+). NAD(+) is bound by residues 100 to 102 and 124 to 127; these read GTT and AANY. Histidine 157 serves as the catalytic Proton donor/acceptor. (S)-2,3,4,5-tetrahydrodipicolinate is bound at residue histidine 158. The active-site Proton donor is the lysine 161. 167-168 lines the (S)-2,3,4,5-tetrahydrodipicolinate pocket; that stretch reads GT.

Belongs to the DapB family.

Its subcellular location is the cytoplasm. It catalyses the reaction (S)-2,3,4,5-tetrahydrodipicolinate + NAD(+) + H2O = (2S,4S)-4-hydroxy-2,3,4,5-tetrahydrodipicolinate + NADH + H(+). The enzyme catalyses (S)-2,3,4,5-tetrahydrodipicolinate + NADP(+) + H2O = (2S,4S)-4-hydroxy-2,3,4,5-tetrahydrodipicolinate + NADPH + H(+). It participates in amino-acid biosynthesis; L-lysine biosynthesis via DAP pathway; (S)-tetrahydrodipicolinate from L-aspartate: step 4/4. Catalyzes the conversion of 4-hydroxy-tetrahydrodipicolinate (HTPA) to tetrahydrodipicolinate. In Acinetobacter baumannii (strain ACICU), this protein is 4-hydroxy-tetrahydrodipicolinate reductase.